A 238-amino-acid chain; its full sequence is Uridylate kinase (238 aa).

Position 12–15 (12–15) interacts with ATP; sequence KLSG. A UMP-binding site is contributed by Gly54. Residues Gly55 and Arg59 each contribute to the ATP site. Residues Asp74 and 135 to 142 each bind UMP; that span reads TGNPFFTT. 3 residues coordinate ATP: Thr162, Tyr168, and Asp171.

Belongs to the UMP kinase family. In terms of assembly, homohexamer.

The protein localises to the cytoplasm. The catalysed reaction is UMP + ATP = UDP + ADP. It functions in the pathway pyrimidine metabolism; CTP biosynthesis via de novo pathway; UDP from UMP (UMPK route): step 1/1. Its activity is regulated as follows. Inhibited by UTP. Its function is as follows. Catalyzes the reversible phosphorylation of UMP to UDP. This is Uridylate kinase from Methylobacillus flagellatus (strain ATCC 51484 / DSM 6875 / VKM B-1610 / KT).